A 470-amino-acid polypeptide reads, in one-letter code: Putative multidrug resistance protein MdtD (470 aa).

Over 1–11 (MTELPDNTRWQ) the chain is Periplasmic. Residues 12–32 (LWIVAFGFFMQSLDTTIVNTA) form a helical membrane-spanning segment. At 33–48 (LPSMAKSLGESPLHMH) the chain is on the cytoplasmic side. Residues 49–69 (MVVVSYVLTVAVMLPASGWLA) form a helical membrane-spanning segment. The Periplasmic portion of the chain corresponds to 70 to 76 (DKIGVRN). Residues 77–97 (IFFAAIVLFTLGSLFCALSGT) form a helical membrane-spanning segment. Over 98–101 (LNQL) the chain is Cytoplasmic. The helical transmembrane segment at 102-124 (VLARVLQGVGGAMMVPVGRLTVM) threads the bilayer. Residues 125–137 (KIVPRAQYMAAMT) are Periplasmic-facing. Residues 138–158 (FVTLPGQIGPLLGPALGGVLV) traverse the membrane as a helical segment. The Cytoplasmic segment spans residues 159–164 (EYASWH). The helical transmembrane segment at 165–185 (WIFLINIPVGIVGAMATFMLM) threads the bilayer. Over 186 to 196 (PNYIIETRRFD) the chain is Periplasmic. Residues 197–217 (LPGFLLLAIGMAVLTLALDGS) form a helical membrane-spanning segment. Over 218–224 (KSMGISP) the chain is Cytoplasmic. Residues 225–245 (WTLAGLAAGGAAAILLYLFHA) form a helical membrane-spanning segment. Topologically, residues 246 to 262 (KKNSGALFSLRLFRTPT) are periplasmic. A helical transmembrane segment spans residues 263 to 283 (FSLGLLGSFAGRIGSGMLPFM). Over 284–285 (TP) the chain is Cytoplasmic. A helical transmembrane segment spans residues 286–306 (VFLQIGLGFSPFHAGLMMIPM). Topologically, residues 307-341 (VLGSMGMKRIVVQIVNRFGYRRVLVATTLGLALVS) are periplasmic. The chain crosses the membrane as a helical span at residues 342 to 362 (LLFMSVALLGWYYLLPLVLLL). At 363 to 395 (QGMVNSARFSSMNTLTLKDLPDTLASSGNSLLS) the chain is on the cytoplasmic side. A helical membrane pass occupies residues 396-416 (MIMQLSMSIGVTIAGMLLGMF). The Periplasmic segment spans residues 417 to 430 (GQQHIGIDSSATHH). Residues 431–451 (VFMYTWLCMAVIIALPAIIFA) traverse the membrane as a helical segment. Residues 452-470 (RVPNDTQQNMVISRRKRSL) lie on the Cytoplasmic side of the membrane.

The protein belongs to the major facilitator superfamily. TCR/Tet family.

The protein resides in the cell inner membrane. In Salmonella typhimurium (strain LT2 / SGSC1412 / ATCC 700720), this protein is Putative multidrug resistance protein MdtD.